Reading from the N-terminus, the 784-residue chain is Toll-like receptor 2 (784 aa).

The signal sequence occupies residues 1–20 (MPRALWTAWVWAVIILSTEG). The Extracellular portion of the chain corresponds to 21 to 587 (ASDQASSLSC…ARLSLSECHR (567 aa)). An intrachain disulfide couples Cys-30 to Cys-36. LRR repeat units lie at residues 54–77 (VKSLDLSNNDITYVGNRDLQRCVN), 78–101 (LKTLRLGANEIHTVEEDSFFHLRN), 102–125 (LEYLDLSYNRLSNLSSSWFRSLYV), 126–150 (LKFLNLLGNLYKTLGETSLFSHLPN), 151–175 (LRTLKVGNSNSFTEIHEKDFTGLTF), 176–199 (LEELEISAQNLQIYVPKSLKSIQN), 200–223 (ISHLILHLKQPILLVDILVDIVSS), 224–250 (LDCFELRDTNLHTFHFSEASISEMSTS), 251–278 (VKKLIFRNVQFTDESFVEVVKLFNYVSG), 279–308 (ILEVEFDDCTHDGIGDFRALSLDRIRHLGN), 309–337 (VETLTIRKLHIPQFFLFHDLSSIYPLTGR), 338–361 (VKRVTIENSKVFLVPCLLSQHLKS), 362–388 (LEYLDLSENLMSEETLKNSACKDAWPF), 389–414 (LQTLVLRQNRLKSLEKTGELLLTLEN), 415–437 (LNNLDISKNNFLSMPETCQWPGK), 438–457 (MKQLNLSSTRIHSLTQCLPQ), 458–478 (TLEILDVSNNNLDSFSLILPQ), 479–500 (LKELYISRNKLKTLPDASFLPV), and 501–524 (LSVMRISRNIINTFSKEQLDSFQQ). Asn-114 is a glycosylation site (N-linked (GlcNAc...) asparagine). An N-linked (GlcNAc...) asparagine glycan is attached at Asn-199. A disulfide bridge links Cys-353 with Cys-382. Cysteines 432 and 454 form a disulfide. Asn-442 carries an N-linked (GlcNAc...) asparagine glycan. One can recognise an LRRCT domain in the interval 525–579 (LKTLEAGGNNFICSCDFLSFTQGQQALGRVLVDWPDDYRCDSPSHVRGQRVQDAR). The helical transmembrane segment at 588–608 (AAVVSAACCALFLLLLLTGVL) threads the bilayer. The Cytoplasmic portion of the chain corresponds to 609-784 (CHRFHGLWYM…WLNLRAAIRS (176 aa)). The TIR domain occupies 639-782 (ICYDAFVSYS…GFWLNLRAAI (144 aa)). A Glycyl lysine isopeptide (Lys-Gly) (interchain with G-Cter in ubiquitin) cross-link involves residue Lys-754. An ATG16L1-binding motif motif is present at residues 761–778 (YLEWPVDETQQEGFWLNL).

The protein belongs to the Toll-like receptor family. Interacts with LY96, TLR1 and TLR6 (via extracellular domain). TLR2 seems to exist in heterodimers with either TLR1 or TLR6 before stimulation by the ligand. The heterodimers form bigger oligomers in response to their corresponding ligands as well as further heterotypic associations with other receptors such as CD14 and/or CD36. Binds MYD88 (via TIR domain). Interacts with TICAM1. Interacts with CNPY3. Interacts with ATG16L1. Interacts with PPP1R11. Interacts with TICAM2. Interacts with TIRAP. Ubiquitinated at Lys-754 by PPP1R11, leading to its degradation. Deubiquitinated by USP2. Post-translationally, glycosylation of Asn-442 is critical for secretion of the N-terminal ectodomain of TLR2.

Its subcellular location is the membrane. The protein localises to the cytoplasmic vesicle. The protein resides in the phagosome membrane. It is found in the membrane raft. Its function is as follows. Cooperates with LY96 to mediate the innate immune response to bacterial lipoproteins and other microbial cell wall components. Cooperates with TLR1 or TLR6 to mediate the innate immune response to bacterial lipoproteins or lipopeptides. Acts via MYD88 and TRAF6, leading to NF-kappa-B activation, cytokine secretion and the inflammatory response. May also promote apoptosis in response to lipoproteins. Forms activation clusters composed of several receptors depending on the ligand, these clusters trigger signaling from the cell surface and subsequently are targeted to the Golgi in a lipid-raft dependent pathway. Forms the cluster TLR2:TLR6:CD14:CD36 in response to diacylated lipopeptides and TLR2:TLR1:CD14 in response to triacylated lipopeptides. In Bos taurus (Bovine), this protein is Toll-like receptor 2 (TLR2).